The sequence spans 248 residues: UPF0736 protein BCAH187_A1335 (248 aa).

The protein belongs to the UPF0736 family.

This is UPF0736 protein BCAH187_A1335 from Bacillus cereus (strain AH187).